Here is a 718-residue protein sequence, read N- to C-terminus: MKLLLALAGLLAPLAMLQTSNGATPALLGEVENSVVLSCMEEAKQLVDRAYKERRESIKRSLQSGSASPTELLFYFKQPVAGTRTAVRAADYLHVALDLLKRKLQPLWPRPFNVTDVLTPAQLNLLSVSSGCAYQDVRVTCPPNDKYRTITGHCNNRRSPTLGASNRAFVRWLPAEYEDGVSMPFGWTPGVNRNGFKVPLARQVSNAIVRFPNDQLTKDQERALMFMQWGQFLDHDITLTPEPATRFSFFTGLNCETSCLQQPPCFPLKIPPNDPRIKNQKDCIPFFRSCPACTRNNITIRNQINALTSFVDASGVYGSEDPLARKLRNLTNQLGLLAINTRFQDNGRALMPFDSLHDDPCLLTNRSARIPCFLAGDMRSSEMPELTSMHTLFVREHNRLATQLKRLNPRWNGEKLYQEARKIVGAMVQIITYRDYLPLVLGPAAMKKYLPQYRSYNDSVDPRIANVFTNAFRYGHTLIQPFMFRLNNQYRPTGPNPRVPLSKVFFASWRVVLEGGIDPILRGLMATPAKLNRQNQIVVDEIRERLFEQVMRIGLDLPALNMQRSRDHGLPGYNAWRRFCGLPQPSTVGELGTVLKNLELARKLMAQYGTPNNIDIWMGGVSEPLEPNGRVGQLLACLIGTQFRKLRDGDRFWWENPGVFSKQQRQALASISLPRIICDNTGITTVSKNNIFMSNTYPRDFVSCNTLPKLNLTSWKET.

The first 15 residues, 1 to 15 (MKLLLALAGLLAPLA), serve as a signal peptide directing secretion. Residues 16–138 (MLQTSNGATP…SSGCAYQDVR (123 aa)) constitute a propeptide that is removed on maturation. Asn-113 carries an N-linked (GlcNAc...) asparagine glycan. Cys-141 and Cys-154 form a disulfide bridge. Heme b is bound at residue Asp-234. His-235 serves as the catalytic Proton acceptor. Asp-236 contributes to the Ca(2+) binding site. Intrachain disulfides connect Cys-255-Cys-265 and Cys-259-Cys-283. Cysteine sulfenic acid (-SOH) is present on Cys-290. The N-linked (GlcNAc...) asparagine glycan is linked to Asn-297. Residues Thr-308, Phe-310, Asp-312, and Ser-314 each contribute to the Ca(2+) site. Asn-329 and Asn-365 each carry an N-linked (GlcNAc...) asparagine glycan. Cysteines 361 and 372 form a disulfide. Glu-382 and Met-383 together coordinate heme b. N-linked (GlcNAc...) asparagine glycosylation occurs at Asn-457. His-476 serves as a coordination point for heme b. 2 disulfides stabilise this stretch: Cys-580–Cys-637 and Cys-678–Cys-704. An N-linked (GlcNAc...) asparagine glycan is attached at Asn-711.

It belongs to the peroxidase family. XPO subfamily. In terms of assembly, homodimer; disulfide-linked. Each monomer consists of a light and a heavy chain. Found in a complex with CP and LTF; interacts directly with CP, which protects CP antioxidant properties by MPO. It depends on Ca(2+) as a cofactor. The cofactor is heme b.

It localises to the lysosome. The enzyme catalyses chloride + H2O2 + H(+) = hypochlorous acid + H2O. In terms of biological role, part of the host defense system of polymorphonuclear leukocytes. It is responsible for microbicidal activity against a wide range of organisms. In the stimulated PMN, MPO catalyzes the production of hypohalous acids, primarily hypochlorous acid in physiologic situations, and other toxic intermediates that greatly enhance PMN microbicidal activity. Mediates the proteolytic cleavage of alpha-1-microglobulin to form t-alpha-1-microglobulin, which potently inhibits oxidation of low density lipoprotein particles and limits vascular damage. In Mus musculus (Mouse), this protein is Myeloperoxidase (Mpo).